A 266-amino-acid chain; its full sequence is 4-hydroxy-tetrahydrodipicolinate reductase (266 aa).

10–15 is an NAD(+) binding site; that stretch reads GPRGRM. Lys-38 provides a ligand contact to NADP(+). NAD(+) contacts are provided by residues 99 to 101 and 125 to 128; these read GTT and APNF. Residue His-155 is the Proton donor/acceptor of the active site. Residue His-156 participates in (S)-2,3,4,5-tetrahydrodipicolinate binding. Lys-159 serves as the catalytic Proton donor. (S)-2,3,4,5-tetrahydrodipicolinate is bound at residue 165-166; that stretch reads GT.

The protein belongs to the DapB family.

It localises to the cytoplasm. It catalyses the reaction (S)-2,3,4,5-tetrahydrodipicolinate + NAD(+) + H2O = (2S,4S)-4-hydroxy-2,3,4,5-tetrahydrodipicolinate + NADH + H(+). The enzyme catalyses (S)-2,3,4,5-tetrahydrodipicolinate + NADP(+) + H2O = (2S,4S)-4-hydroxy-2,3,4,5-tetrahydrodipicolinate + NADPH + H(+). It functions in the pathway amino-acid biosynthesis; L-lysine biosynthesis via DAP pathway; (S)-tetrahydrodipicolinate from L-aspartate: step 4/4. In terms of biological role, catalyzes the conversion of 4-hydroxy-tetrahydrodipicolinate (HTPA) to tetrahydrodipicolinate. This is 4-hydroxy-tetrahydrodipicolinate reductase from Bacillus anthracis (strain A0248).